A 126-amino-acid polypeptide reads, in one-letter code: Probable cystatin-16 (126 aa).

The signal sequence occupies residues 1-20 (MFLKATLLLGLAVLGMHVWA). Cysteine 84 and cysteine 94 are disulfide-bonded. N-linked (GlcNAc...) asparagine glycosylation is present at asparagine 106.

Belongs to the cystatin family.

It localises to the secreted. The chain is Probable cystatin-16 from Bos taurus (Bovine).